Reading from the N-terminus, the 69-residue chain is Putative membrane protein insertion efficiency factor (69 aa).

This sequence belongs to the UPF0161 family.

It localises to the cell membrane. In terms of biological role, could be involved in insertion of integral membrane proteins into the membrane. In Clostridium beijerinckii (strain ATCC 51743 / NCIMB 8052) (Clostridium acetobutylicum), this protein is Putative membrane protein insertion efficiency factor.